The sequence spans 87 residues: Omega-theraphotoxin-Gr1a (87 aa).

An N-terminal signal peptide occupies residues 1 to 24 (MKAQIFVVVLGLAALSVLCYGSEA). Residues 25–49 (DESALHEEIFQLLAASDEVPKPQER) constitute a propeptide that is removed on maturation. 3 disulfide bridges follow: Cys51–Cys65, Cys58–Cys70, and Cys64–Cys79. Residue Val85 is modified to Valine amide.

As to expression, expressed by the venom gland.

The protein resides in the secreted. In terms of biological role, inhibits P/Q- (Cav2.1/CACNA1A) and N-type (Cav2.2/CACNA1B) voltage-gated calcium channel by modifying voltage-dependent gating. It selectively and reversibly blocks the calcium channels coupled to glutamate release. Also inhibits potassium channels (Kv2.1/KCNB1) with lower affinity. Has also been shown to weakly inhibit Kv11.1/KCNH2/ERG1, Kv1.2/KCNA2, Kv1.3/KCNA3, Nav1.5/SCN5A, Nav1.7/SCN9A and TRPV1. The protein is Omega-theraphotoxin-Gr1a of Grammostola rosea (Chilean rose tarantula).